We begin with the raw amino-acid sequence, 255 residues long: MSCNNNGLAFFPENFSLQNHHQEEEDHPQLLQDFHGFLGKRSPMNNVQGFCNLDMNGDEEYSDDGSKMGEKKRRLNMEQLKALEKDFELGNKLESDRKLELARALGLQPRQIAIWFQNRRARSKTKQLEKDYDMLKRQFESLRDENEVLQTQNQKLQAQVMALKSREPIESINLNKETEGSCSDRSENISGDIRPPEIDSQFALGHPPTTTTMQFFQNSSSEQRMVKEENSISNMFCGIDDQSGFWPWLDQQQYN.

Residues 68–127 (MGEKKRRLNMEQLKALEKDFELGNKLESDRKLELARALGLQPRQIAIWFQNRRARSKTKQ) constitute a DNA-binding region (homeobox). The segment at 128–163 (LEKDYDMLKRQFESLRDENEVLQTQNQKLQAQVMAL) is leucine-zipper.

It belongs to the HD-ZIP homeobox family. Class I subfamily. In terms of tissue distribution, expressed in young leaves, in the adaxial domain of leaf primordia and the rib meristem. Expressed in the styles of flowers and siliques.

It is found in the nucleus. Its function is as follows. Probable transcription factor. In Arabidopsis thaliana (Mouse-ear cress), this protein is Homeobox-leucine zipper protein ATHB-23 (ATHB-23).